Consider the following 675-residue polypeptide: DNA ligase (675 aa).

Residues D36–D40, S85–L86, and E118 contribute to the NAD(+) site. The active-site N6-AMP-lysine intermediate is the K120. Residues R141, E178, K298, and K322 each coordinate NAD(+). Zn(2+) contacts are provided by C416, C419, C434, and C439. The BRCT domain occupies T598–Q675.

It belongs to the NAD-dependent DNA ligase family. LigA subfamily. Mg(2+) is required as a cofactor. The cofactor is Mn(2+).

The enzyme catalyses NAD(+) + (deoxyribonucleotide)n-3'-hydroxyl + 5'-phospho-(deoxyribonucleotide)m = (deoxyribonucleotide)n+m + AMP + beta-nicotinamide D-nucleotide.. DNA ligase that catalyzes the formation of phosphodiester linkages between 5'-phosphoryl and 3'-hydroxyl groups in double-stranded DNA using NAD as a coenzyme and as the energy source for the reaction. It is essential for DNA replication and repair of damaged DNA. This is DNA ligase from Acaryochloris marina (strain MBIC 11017).